Reading from the N-terminus, the 731-residue chain is Penicillin-binding protein 2a (731 aa).

The Cytoplasmic segment spans residues 1 to 56 (MKLDKLFEKFLSLFKKETSELEDSDSTILRRSRSDRKKLAQVGPIRKFWRRYHLTK). A helical; Signal-anchor for type II membrane protein membrane pass occupies residues 57–77 (IILILGLSAGLLVGIYLFAVA). Residues 78–156 (KSTNVNDLQN…FLAIVTAGRS (79 aa)) form a hydrophobic; associated with cytoplasmic membrane. Required for transglycosylase activity, but not for lipid II binding region. A transglycosylase region spans residues 78–300 (KSTNVNDLQN…SQLHDKYEGK (223 aa)). Over 78 to 731 (KSTNVNDLQN…IWDSIVNLFR (654 aa)) the chain is Extracellular. Residue glutamate 131 is the Proton donor; for transglycosylase activity of the active site. The interval 301–731 (ISDYRYPSYF…IWDSIVNLFR (431 aa)) is transpeptidase. Serine 410 (acyl-ester intermediate; for transpeptidase activity) is an active-site residue. Residues 674-694 (ANTKRQVQTNDNSQTDDNLSD) are disordered. The span at 676-690 (TKRQVQTNDNSQTDD) shows a compositional bias: polar residues.

The protein in the N-terminal section; belongs to the glycosyltransferase 51 family. In the C-terminal section; belongs to the transpeptidase family. As to quaternary structure, homodimer. May also form higher order oligomers. Self-association may depend on its transmembrane and/or cytoplasmic regions. Interacts with MacP; interaction is required for the function of this protein.

It localises to the cell membrane. The protein localises to the secreted. The protein resides in the cell wall. The enzyme catalyses Preferential cleavage: (Ac)2-L-Lys-D-Ala-|-D-Ala. Also transpeptidation of peptidyl-alanyl moieties that are N-acyl substituents of D-alanine.. It carries out the reaction [GlcNAc-(1-&gt;4)-Mur2Ac(oyl-L-Ala-gamma-D-Glu-L-Lys-D-Ala-D-Ala)](n)-di-trans,octa-cis-undecaprenyl diphosphate + beta-D-GlcNAc-(1-&gt;4)-Mur2Ac(oyl-L-Ala-gamma-D-Glu-L-Lys-D-Ala-D-Ala)-di-trans,octa-cis-undecaprenyl diphosphate = [GlcNAc-(1-&gt;4)-Mur2Ac(oyl-L-Ala-gamma-D-Glu-L-Lys-D-Ala-D-Ala)](n+1)-di-trans,octa-cis-undecaprenyl diphosphate + di-trans,octa-cis-undecaprenyl diphosphate + H(+). It participates in cell wall biogenesis; peptidoglycan biosynthesis. In terms of biological role, cell wall formation. Synthesis of cross-linked peptidoglycan (PG) from the lipid intermediates. Binds dansylated lipid II and catalyzes the polymerization of glycan chains. Hydrolyzes S2d (N-benzoyl-D-alanylmercaptoacetic acid) molecule, a synthetic thiolester analog of cell wall stem peptide. Active against bocillin, a fluorescent penicillin. No transpeptidase activity with non-fluorescent lysine-containing lipid II as substrate. This chain is Penicillin-binding protein 2a, found in Streptococcus pneumoniae serotype 2 (strain D39 / NCTC 7466).